We begin with the raw amino-acid sequence, 535 residues long: MTDQTTRLPVRRALISVSDKTGILEFARELQQLGVEILSTGGTYKLLKDNGVNAVEVADYTGFAEMMDGRVKTLHPKIHGGILGRRGTDDAIMNEHGIKPIDLVAVNLYPFEATISKPGCDLPTAIENIDIGGPTMVRSAAKNHKDVAIVVNASDYAGIVEGLKAGGLTYAQRFDLMLKAFEHTAAYDGMIANYMGTIDQAKDTLSTEARSEFPRTFNSQFVKAQEMRYGENPHQSAAFYVEAKKGEASISTAVQLQGKELSFNNVADTDAALECVKSFVKPACVIVKHANPCGVAVVPEDEGGIRKAYDLAYATDTESAFGGIIAFNRELDGETAKAIVDRQFVEVIIAPKISQAARDVVAAKQNVRLLECGEWPAERAAGWDFKRVNGGLLVQSRDIGMITADDLKIVTKRAPTEQEIHDLVFAWKVAKFVKSNAIVYAKQRQTIGVGAGQMSRVNSARIAAIKAEHAGLQVQGAVMASDAFFPFRDGIDNAAKVGISAVIQPGGSMRDAEVIAAADEAGIAMVFTGMRHFRH.

In terms of domain architecture, MGS-like spans 6-151 (TRLPVRRALI…KNHKDVAIVV (146 aa)).

It belongs to the PurH family.

It carries out the reaction (6R)-10-formyltetrahydrofolate + 5-amino-1-(5-phospho-beta-D-ribosyl)imidazole-4-carboxamide = 5-formamido-1-(5-phospho-D-ribosyl)imidazole-4-carboxamide + (6S)-5,6,7,8-tetrahydrofolate. It catalyses the reaction IMP + H2O = 5-formamido-1-(5-phospho-D-ribosyl)imidazole-4-carboxamide. It participates in purine metabolism; IMP biosynthesis via de novo pathway; 5-formamido-1-(5-phospho-D-ribosyl)imidazole-4-carboxamide from 5-amino-1-(5-phospho-D-ribosyl)imidazole-4-carboxamide (10-formyl THF route): step 1/1. The protein operates within purine metabolism; IMP biosynthesis via de novo pathway; IMP from 5-formamido-1-(5-phospho-D-ribosyl)imidazole-4-carboxamide: step 1/1. The protein is Bifunctional purine biosynthesis protein PurH of Pseudomonas putida (strain ATCC 700007 / DSM 6899 / JCM 31910 / BCRC 17059 / LMG 24140 / F1).